A 175-amino-acid polypeptide reads, in one-letter code: Large ribosomal subunit protein bL17 (175 aa).

The disordered stretch occupies residues 127-175 (GEAEAATKRAVKEDALKKDEAPAAESVEDAKPAEDAPAAEAADDKGKDA). Residues 131 to 147 (AATKRAVKEDALKKDEA) are compositionally biased toward basic and acidic residues.

It belongs to the bacterial ribosomal protein bL17 family. In terms of assembly, part of the 50S ribosomal subunit. Contacts protein L32.

The sequence is that of Large ribosomal subunit protein bL17 from Streptomyces griseus subsp. griseus (strain JCM 4626 / CBS 651.72 / NBRC 13350 / KCC S-0626 / ISP 5235).